A 588-amino-acid chain; its full sequence is Ribonuclease Y (588 aa).

Residues 7–27 (VLLVAVLLLTVVVVGAVLVGV) traverse the membrane as a helical segment. One can recognise a KH domain in the interval 278-359 (VVSVLHLPGD…HRIEEVHDLA (82 aa)). Residues 404–497 (VLKHLVESAH…TQASDACSGG (94 aa)) enclose the HD domain.

This sequence belongs to the RNase Y family.

The protein localises to the cell membrane. Functionally, endoribonuclease that initiates mRNA decay. In Salinispora tropica (strain ATCC BAA-916 / DSM 44818 / JCM 13857 / NBRC 105044 / CNB-440), this protein is Ribonuclease Y.